The primary structure comprises 308 residues: Dipeptide transport system permease protein DppB (308 aa).

Helical transmembrane passes span 10-30 (WAMA…MKVI), 59-79 (LIFQ…GPSI), 100-120 (LGMT…VIAA), 131-151 (AMSL…TLLI), 168-188 (SPIH…AIIA), 228-248 (MPVI…SFVI), and 278-298 (VFYS…YGLL). Positions 94-295 (FPVSFELGMT…IMLFLVDLAY (202 aa)) constitute an ABC transmembrane type-1 domain.

This sequence belongs to the binding-protein-dependent transport system permease family. OppBC subfamily.

The protein resides in the cell membrane. In terms of biological role, probably part of the ABC transporter DppBCDE involved in dipeptide transport. Responsible for the translocation of the substrate across the membrane. The chain is Dipeptide transport system permease protein DppB (dppB) from Bacillus subtilis (strain 168).